The sequence spans 391 residues: Steroid side-chain-cleaving aldolase (391 aa).

The Proton acceptor role is filled by Tyr294. Tyr344 acts as the Proton donor in catalysis.

This sequence belongs to the thiolase-like superfamily. Homodimer. Interacts with the ChsH1/ChsH2 hydratase via the DUF35 C-terminal region of ChsH2 (ChsH2-DUF35).

The catalysed reaction is 17-hydroxy-3-oxochol-4-en-22-oyl-CoA = androst-4-ene-3,17-dione + propanoyl-CoA. Its function is as follows. Probably involved in bile acid degradation. In vitro, when associated with the ChsH1/ChsH2 hydratase, catalyzes the retroaldol cleavage of 17-hydroxy-3-oxo-4-pregnene-20-carboxyl-CoA (17-HOPC-CoA), forming androst-4-ene-3,17-dione and propionyl-CoA. The in vivo substrate is probably a closely analogous bile acid degradation metabolite. The polypeptide is Steroid side-chain-cleaving aldolase (Thermomonospora curvata (strain ATCC 19995 / DSM 43183 / JCM 3096 / KCTC 9072 / NBRC 15933 / NCIMB 10081 / Henssen B9)).